A 314-amino-acid chain; its full sequence is Homoserine kinase (314 aa).

95–105 provides a ligand contact to ATP; sequence PHSRGLGSSAS.

The protein belongs to the GHMP kinase family. Homoserine kinase subfamily.

Its subcellular location is the cytoplasm. The enzyme catalyses L-homoserine + ATP = O-phospho-L-homoserine + ADP + H(+). Its pathway is amino-acid biosynthesis; L-threonine biosynthesis; L-threonine from L-aspartate: step 4/5. In terms of biological role, catalyzes the ATP-dependent phosphorylation of L-homoserine to L-homoserine phosphate. This is Homoserine kinase from Rhodococcus opacus (strain B4).